Here is a 431-residue protein sequence, read N- to C-terminus: Glutamate-1-semialdehyde 2,1-aminomutase (431 aa).

Position 265 is an N6-(pyridoxal phosphate)lysine (Lys265).

This sequence belongs to the class-III pyridoxal-phosphate-dependent aminotransferase family. HemL subfamily. Homodimer. Pyridoxal 5'-phosphate serves as cofactor.

Its subcellular location is the cytoplasm. The enzyme catalyses (S)-4-amino-5-oxopentanoate = 5-aminolevulinate. It participates in porphyrin-containing compound metabolism; protoporphyrin-IX biosynthesis; 5-aminolevulinate from L-glutamyl-tRNA(Glu): step 2/2. The protein is Glutamate-1-semialdehyde 2,1-aminomutase of Aliivibrio fischeri (strain ATCC 700601 / ES114) (Vibrio fischeri).